A 681-amino-acid chain; its full sequence is DNA-directed RNA polymerase subunit beta' (681 aa).

The Zn(2+) site is built by Cys-69, Cys-71, Cys-87, and Cys-90. Mg(2+) contacts are provided by Asp-489, Asp-491, and Asp-493.

Belongs to the RNA polymerase beta' chain family. RpoC1 subfamily. As to quaternary structure, in plastids the minimal PEP RNA polymerase catalytic core is composed of four subunits: alpha, beta, beta', and beta''. When a (nuclear-encoded) sigma factor is associated with the core the holoenzyme is formed, which can initiate transcription. Requires Mg(2+) as cofactor. The cofactor is Zn(2+).

The protein resides in the plastid. It is found in the chloroplast. It carries out the reaction RNA(n) + a ribonucleoside 5'-triphosphate = RNA(n+1) + diphosphate. DNA-dependent RNA polymerase catalyzes the transcription of DNA into RNA using the four ribonucleoside triphosphates as substrates. The sequence is that of DNA-directed RNA polymerase subunit beta' from Cycas taitungensis (Prince sago).